A 155-amino-acid polypeptide reads, in one-letter code: Endoribonuclease YbeY (155 aa).

Zn(2+) is bound by residues histidine 120, histidine 124, and histidine 130.

The protein belongs to the endoribonuclease YbeY family. Zn(2+) serves as cofactor.

It is found in the cytoplasm. Functionally, single strand-specific metallo-endoribonuclease involved in late-stage 70S ribosome quality control and in maturation of the 3' terminus of the 16S rRNA. The protein is Endoribonuclease YbeY of Staphylococcus epidermidis (strain ATCC 12228 / FDA PCI 1200).